The primary structure comprises 97 residues: MNLAVQDVVKRPLITEKAERAREASRQYAFEVHRDATKIQVKQAVEKLFNVHVLDVRTAIARGKNKRVGRNVGRRPNWKKAYVTLKEGDTIALFEGT.

The protein belongs to the universal ribosomal protein uL23 family. Part of the 50S ribosomal subunit. Contacts protein L29, and trigger factor when it is bound to the ribosome.

Its function is as follows. One of the early assembly proteins it binds 23S rRNA. One of the proteins that surrounds the polypeptide exit tunnel on the outside of the ribosome. Forms the main docking site for trigger factor binding to the ribosome. The polypeptide is Large ribosomal subunit protein uL23 (Anaeromyxobacter dehalogenans (strain 2CP-C)).